We begin with the raw amino-acid sequence, 290 residues long: Ribosomal RNA small subunit methyltransferase A (290 aa).

S-adenosyl-L-methionine-binding residues include Asn-27, Leu-29, Gly-54, Glu-75, Asp-100, and Asn-125.

It belongs to the class I-like SAM-binding methyltransferase superfamily. rRNA adenine N(6)-methyltransferase family. RsmA subfamily.

The protein localises to the cytoplasm. The catalysed reaction is adenosine(1518)/adenosine(1519) in 16S rRNA + 4 S-adenosyl-L-methionine = N(6)-dimethyladenosine(1518)/N(6)-dimethyladenosine(1519) in 16S rRNA + 4 S-adenosyl-L-homocysteine + 4 H(+). Its function is as follows. Specifically dimethylates two adjacent adenosines (A1518 and A1519) in the loop of a conserved hairpin near the 3'-end of 16S rRNA in the 30S particle. May play a critical role in biogenesis of 30S subunits. The polypeptide is Ribosomal RNA small subunit methyltransferase A (Streptococcus agalactiae serotype Ia (strain ATCC 27591 / A909 / CDC SS700)).